A 315-amino-acid chain; its full sequence is Ribosomal RNA small subunit methyltransferase H (315 aa).

S-adenosyl-L-methionine contacts are provided by residues 37–39 (AGH), D57, Y84, D105, and Q112.

This sequence belongs to the methyltransferase superfamily. RsmH family.

The protein resides in the cytoplasm. The enzyme catalyses cytidine(1402) in 16S rRNA + S-adenosyl-L-methionine = N(4)-methylcytidine(1402) in 16S rRNA + S-adenosyl-L-homocysteine + H(+). Its function is as follows. Specifically methylates the N4 position of cytidine in position 1402 (C1402) of 16S rRNA. In Lachnospira eligens (strain ATCC 27750 / DSM 3376 / VPI C15-48 / C15-B4) (Eubacterium eligens), this protein is Ribosomal RNA small subunit methyltransferase H.